The sequence spans 304 residues: UTP--glucose-1-phosphate uridylyltransferase 1 (304 aa).

Belongs to the UDPGP type 2 family.

The enzyme catalyses alpha-D-glucose 1-phosphate + UTP + H(+) = UDP-alpha-D-glucose + diphosphate. It functions in the pathway carbohydrate metabolism; nucleotide-sugar metabolism. This is UTP--glucose-1-phosphate uridylyltransferase 1 (hasC1) from Streptococcus pyogenes serotype M1.